Reading from the N-terminus, the 721-residue chain is Penicillin-binding protein activator LpoA (721 aa).

The signal sequence occupies residues 1 to 26 (MVPLTFLRTKASRSLPIMLAALIFAG). Cys27 is lipidated: N-palmitoyl cysteine. A lipid anchor (S-diacylglycerol cysteine) is attached at Cys27. The segment covering 316–330 (TSDLTSAQAPAQGTM) has biased composition (polar residues). The segment at 316-393 (TSDLTSAQAP…PAAQPQAVAA (78 aa)) is disordered. A compositionally biased stretch (low complexity) spans 331–393 (QNPVTAPTTP…PAAQPQAVAA (63 aa)).

Belongs to the LpoA family. As to quaternary structure, interacts with PBP1a.

The protein resides in the cell outer membrane. In terms of biological role, regulator of peptidoglycan synthesis that is essential for the function of penicillin-binding protein 1A (PBP1a). In Enterobacter sp. (strain 638), this protein is Penicillin-binding protein activator LpoA.